The chain runs to 89 residues: Small ribosomal subunit protein uS14A (89 aa).

It belongs to the universal ribosomal protein uS14 family. In terms of assembly, part of the 30S ribosomal subunit. Contacts proteins S3 and S10.

Binds 16S rRNA, required for the assembly of 30S particles and may also be responsible for determining the conformation of the 16S rRNA at the A site. This chain is Small ribosomal subunit protein uS14A, found in Ligilactobacillus salivarius (strain UCC118) (Lactobacillus salivarius).